A 182-amino-acid chain; its full sequence is uncharacterized protein (182 aa).

Disordered stretches follow at residues 17–53 and 128–159; these read AVSQAQGRPGHPDAPPNIYEGGLGSPQPQCPSAQGSK and DSLGSSASSSSMDPDKGALPQPSPSRLRPKRS. A compositionally biased stretch (polar residues) spans 42 to 53; that stretch reads PQPQCPSAQGSK. The span at 129-138 shows a compositional bias: low complexity; the sequence is SLGSSASSSS.

This is an uncharacterized protein from Homo sapiens (Human).